A 196-amino-acid chain; its full sequence is 3-isopropylmalate dehydratase small subunit (196 aa).

It belongs to the LeuD family. LeuD type 1 subfamily. As to quaternary structure, heterodimer of LeuC and LeuD.

The enzyme catalyses (2R,3S)-3-isopropylmalate = (2S)-2-isopropylmalate. The protein operates within amino-acid biosynthesis; L-leucine biosynthesis; L-leucine from 3-methyl-2-oxobutanoate: step 2/4. Its function is as follows. Catalyzes the isomerization between 2-isopropylmalate and 3-isopropylmalate, via the formation of 2-isopropylmaleate. This is 3-isopropylmalate dehydratase small subunit from Corynebacterium efficiens (strain DSM 44549 / YS-314 / AJ 12310 / JCM 11189 / NBRC 100395).